Here is a 249-residue protein sequence, read N- to C-terminus: Coproheme decarboxylase (249 aa).

Fe-coproporphyrin III contacts are provided by residues Arg131, 145-149 (YPMNK), His172, and Gln185. The active site involves Tyr145.

The protein belongs to the ChdC family. Type 1 subfamily. It depends on Fe-coproporphyrin III as a cofactor.

The catalysed reaction is Fe-coproporphyrin III + 2 H2O2 + 2 H(+) = heme b + 2 CO2 + 4 H2O. It catalyses the reaction Fe-coproporphyrin III + H2O2 + H(+) = harderoheme III + CO2 + 2 H2O. The enzyme catalyses harderoheme III + H2O2 + H(+) = heme b + CO2 + 2 H2O. It functions in the pathway porphyrin-containing compound metabolism; protoheme biosynthesis. Involved in coproporphyrin-dependent heme b biosynthesis. Catalyzes the decarboxylation of Fe-coproporphyrin III (coproheme) to heme b (protoheme IX), the last step of the pathway. The reaction occurs in a stepwise manner with a three-propionate intermediate. The sequence is that of Coproheme decarboxylase from Staphylococcus carnosus (strain TM300).